The chain runs to 86 residues: Photosystem I reaction center subunit PsaK (86 aa).

A run of 2 helical transmembrane segments spans residues 15–35 (SWSI…IGLG) and 57–77 (GLPE…GAII).

It belongs to the PsaG/PsaK family.

The protein resides in the plastid. It is found in the chloroplast thylakoid membrane. In Gracilaria tenuistipitata var. liui (Red alga), this protein is Photosystem I reaction center subunit PsaK.